We begin with the raw amino-acid sequence, 158 residues long: Small ribosomal subunit protein uS19 (158 aa).

This sequence belongs to the universal ribosomal protein uS19 family.

In terms of biological role, protein S19 forms a complex with S13 that binds strongly to the 16S ribosomal RNA. In Pyrobaculum aerophilum (strain ATCC 51768 / DSM 7523 / JCM 9630 / CIP 104966 / NBRC 100827 / IM2), this protein is Small ribosomal subunit protein uS19.